The sequence spans 408 residues: Argininosuccinate synthase (408 aa).

ATP-binding positions include 10 to 18 (AYSGGLDTS) and Ala37. 2 residues coordinate L-citrulline: Tyr90 and Ser95. Gly120 is an ATP binding site. L-aspartate contacts are provided by Thr122, Asn126, and Asp127. Asn126 provides a ligand contact to L-citrulline. L-citrulline contacts are provided by Arg130, Ser182, Ser191, Glu267, and Tyr279.

Belongs to the argininosuccinate synthase family. Type 1 subfamily. Homotetramer.

The protein resides in the cytoplasm. It carries out the reaction L-citrulline + L-aspartate + ATP = 2-(N(omega)-L-arginino)succinate + AMP + diphosphate + H(+). It functions in the pathway amino-acid biosynthesis; L-arginine biosynthesis; L-arginine from L-ornithine and carbamoyl phosphate: step 2/3. In Paraburkholderia xenovorans (strain LB400), this protein is Argininosuccinate synthase.